The primary structure comprises 408 residues: 1-deoxy-D-xylulose 5-phosphate reductoisomerase (408 aa).

T19, G20, S21, I22, G45, N47, and N130 together coordinate NADPH. Position 131 (K131) interacts with 1-deoxy-D-xylulose 5-phosphate. E132 serves as a coordination point for NADPH. D156 serves as a coordination point for Mn(2+). Residues S157, E158, S182, and H205 each coordinate 1-deoxy-D-xylulose 5-phosphate. E158 provides a ligand contact to Mn(2+). NADPH is bound at residue G211. 1-deoxy-D-xylulose 5-phosphate is bound by residues S218, N223, K224, and E227. E227 serves as a coordination point for Mn(2+).

This sequence belongs to the DXR family. It depends on Mg(2+) as a cofactor. Mn(2+) serves as cofactor.

It catalyses the reaction 2-C-methyl-D-erythritol 4-phosphate + NADP(+) = 1-deoxy-D-xylulose 5-phosphate + NADPH + H(+). Its pathway is isoprenoid biosynthesis; isopentenyl diphosphate biosynthesis via DXP pathway; isopentenyl diphosphate from 1-deoxy-D-xylulose 5-phosphate: step 1/6. Its function is as follows. Catalyzes the NADPH-dependent rearrangement and reduction of 1-deoxy-D-xylulose-5-phosphate (DXP) to 2-C-methyl-D-erythritol 4-phosphate (MEP). This is 1-deoxy-D-xylulose 5-phosphate reductoisomerase from Gluconobacter oxydans (strain 621H) (Gluconobacter suboxydans).